The chain runs to 557 residues: Eudesmanediol synthase (557 aa).

Aspartate 310 and aspartate 314 together coordinate Mg(2+). The substrate site is built by aspartate 310, aspartate 314, arginine 450, and asparagine 453. The DDXXD motif motif lies at 310–314; sequence DDTFD. Residues asparagine 453 and serine 457 each contribute to the Mg(2+) site.

Belongs to the terpene synthase family. In terms of assembly, monomer. It depends on Mg(2+) as a cofactor. Requires Mn(2+) as cofactor. As to expression, specifically expressed in roots.

The protein localises to the cytoplasm. It catalyses the reaction (2E,6E)-farnesyl diphosphate + 2 H2O = 7-epi-ent-eudesmane-5,11-diol + diphosphate. It participates in secondary metabolite biosynthesis; terpenoid biosynthesis. In terms of biological role, component of the volatile terpenes biosynthesis pathways. Dihydroxylated sesquiterpenoid synthase that generates dually hydroxylated products directly from (E,E)-farnesyl diphosphate, primarily eudesmane-2,11-diol, along with two closely related structural isomers. The chain is Eudesmanediol synthase from Zea mays (Maize).